The sequence spans 204 residues: Sex-determining region Y protein (204 aa).

The sufficient for interaction with KPNB1 stretch occupies residues Arg-59–Lys-136. The HMG box DNA-binding region spans Val-60–Lys-128. 2 required for nuclear localization regions span residues Lys-61–Lys-77 and Arg-130–Lys-136. The tract at residues Trp-107 to Pro-139 is sufficient for interaction with EP300. Lys-136 is subject to N6-acetyllysine. The tract at residues Leu-138–Ser-155 is necessary for interaction with ZNF208 isoform KRAB-O. Residues Arg-175–Leu-204 are disordered. Residues Gln-194 to Leu-204 are compositionally biased toward basic and acidic residues. Residues Tyr-198–Leu-204 form a necessary for interaction with SLC9A3R2 region.

It belongs to the SRY family. In terms of assembly, interacts with CALM, EP300, HDAC3, KPNB1, ZNF208 isoform KRAB-O, PARP1, SLC9A3R2 and WT1. The interaction with EP300 modulates its DNA-binding activity. The interaction with KPNB1 is sensitive to dissociation by Ran in the GTP-bound form. Interaction with PARP1 impaired its DNA-binding activity. Post-translationally, phosphorylated on serine residues by PKA. Phosphorylation by PKA enhances its DNA-binding activity and stimulates transcription repression. In terms of processing, acetylation of Lys-136 contributes to its nuclear localization and enhances its interaction with KPNB1. Deacetylated by HDAC3. Poly-ADP-ribosylated by PARP1. ADP-ribosylation reduces its DNA-binding activity.

Its subcellular location is the nucleus speckle. The protein localises to the cytoplasm. The protein resides in the nucleus. Its function is as follows. Transcriptional regulator that controls a genetic switch in male development. It is necessary and sufficient for initiating male sex determination by directing the development of supporting cell precursors (pre-Sertoli cells) as Sertoli rather than granulosa cells. Involved in different aspects of gene regulation including promoter activation or repression. Binds to the DNA consensus sequence 5'-[AT]AACAA[AT]-3'. SRY HMG box recognizes DNA by partial intercalation in the minor groove and promotes DNA bending. Also involved in pre-mRNA splicing. In male adult brain involved in the maintenance of motor functions of dopaminergic neurons. The chain is Sex-determining region Y protein from Homo sapiens (Human).